The sequence spans 529 residues: Tyrosinase (529 aa).

Positions 1-18 (MLLAVLYCLLWSFQTSAG) are cleaved as a signal peptide. Residues 19–476 (HFPRACVSSK…YLEQASRIWS (458 aa)) lie on the Lumenal, melanosome side of the membrane. Asparagine 86, asparagine 111, and asparagine 161 each carry an N-linked (GlcNAc...) asparagine glycan. Histidine 180, histidine 202, and histidine 211 together coordinate Cu cation. The N-linked (GlcNAc...) asparagine glycan is linked to asparagine 230. A disordered region spans residues 287–313 (SLCNGTPEGPLQRNPGNHDKSRTPRLP). A glycan (N-linked (GlcNAc...) asparagine) is linked at asparagine 337. The Cu cation site is built by histidine 363 and histidine 367. A glycan (N-linked (GlcNAc...) asparagine) is linked at asparagine 371. Residue histidine 390 coordinates Cu cation. A helical membrane pass occupies residues 477-497 (WLLGAAMVGAVLTALLAGLVS). The Cytoplasmic portion of the chain corresponds to 498–529 (LLCRHKRKQLPEEKQPLLMEKEDYHSLYQSHL).

Belongs to the tyrosinase family. Forms an OPN3-dependent complex with DCT in response to blue light in melanocytes. Cu(2+) serves as cofactor. Post-translationally, glycosylated.

The protein localises to the melanosome membrane. It is found in the melanosome. The catalysed reaction is 2 L-dopa + O2 = 2 L-dopaquinone + 2 H2O. It carries out the reaction L-tyrosine + O2 = L-dopaquinone + H2O. It catalyses the reaction 2 5,6-dihydroxyindole-2-carboxylate + O2 = 2 indole-5,6-quinone-2-carboxylate + 2 H2O. In terms of biological role, this is a copper-containing oxidase that functions in the formation of pigments such as melanins and other polyphenolic compounds. Catalyzes the initial and rate limiting step in the cascade of reactions leading to melanin production from tyrosine. In addition to hydroxylating tyrosine to DOPA (3,4-dihydroxyphenylalanine), also catalyzes the oxidation of DOPA to DOPA-quinone, and possibly the oxidation of DHI (5,6-dihydroxyindole) to indole-5,6 quinone. The chain is Tyrosinase (TYR) from Gorilla gorilla gorilla (Western lowland gorilla).